The primary structure comprises 553 residues: Glutamate--tRNA ligase (553 aa).

The short motif at 103 to 113 (PNPSGPLHIGH) is the 'HIGH' region element.

It belongs to the class-I aminoacyl-tRNA synthetase family. Glutamate--tRNA ligase type 2 subfamily.

The protein localises to the cytoplasm. It carries out the reaction tRNA(Glu) + L-glutamate + ATP = L-glutamyl-tRNA(Glu) + AMP + diphosphate. Functionally, catalyzes the attachment of glutamate to tRNA(Glu) in a two-step reaction: glutamate is first activated by ATP to form Glu-AMP and then transferred to the acceptor end of tRNA(Glu). In Methanothermobacter thermautotrophicus (strain ATCC 29096 / DSM 1053 / JCM 10044 / NBRC 100330 / Delta H) (Methanobacterium thermoautotrophicum), this protein is Glutamate--tRNA ligase.